An 81-amino-acid chain; its full sequence is ATP synthase subunit c, chloroplastic (81 aa).

2 helical membrane passes run 7-27 (AASV…PGVG) and 57-77 (LAFM…LLFA).

Belongs to the ATPase C chain family. As to quaternary structure, F-type ATPases have 2 components, F(1) - the catalytic core - and F(0) - the membrane proton channel. F(1) has five subunits: alpha(3), beta(3), gamma(1), delta(1), epsilon(1). F(0) has four main subunits: a(1), b(1), b'(1) and c(10-14). The alpha and beta chains form an alternating ring which encloses part of the gamma chain. F(1) is attached to F(0) by a central stalk formed by the gamma and epsilon chains, while a peripheral stalk is formed by the delta, b and b' chains.

The protein localises to the plastid. The protein resides in the chloroplast thylakoid membrane. Functionally, f(1)F(0) ATP synthase produces ATP from ADP in the presence of a proton or sodium gradient. F-type ATPases consist of two structural domains, F(1) containing the extramembraneous catalytic core and F(0) containing the membrane proton channel, linked together by a central stalk and a peripheral stalk. During catalysis, ATP synthesis in the catalytic domain of F(1) is coupled via a rotary mechanism of the central stalk subunits to proton translocation. In terms of biological role, key component of the F(0) channel; it plays a direct role in translocation across the membrane. A homomeric c-ring of between 10-14 subunits forms the central stalk rotor element with the F(1) delta and epsilon subunits. The sequence is that of ATP synthase subunit c, chloroplastic from Arabis hirsuta (Hairy rock-cress).